Consider the following 617-residue polypeptide: Probable LRR receptor-like serine/threonine-protein kinase RKF3 (617 aa).

The signal sequence occupies residues Met-1–Ala-20. The Extracellular segment spans residues Gln-21–Lys-212. Residues Asn-22, Asn-124, Asn-135, and Asn-165 are each glycosylated (N-linked (GlcNAc...) asparagine). A helical membrane pass occupies residues Val-213–Phe-233. Over Trp-234–Thr-617 the chain is Cytoplasmic. A Protein kinase domain is found at Phe-283–Thr-563. ATP is bound by residues Ile-289 to Val-297 and Lys-311. The active-site Proton acceptor is Asp-412. The segment at Val-585–Thr-617 is disordered.

Belongs to the protein kinase superfamily. Ser/Thr protein kinase family. In terms of tissue distribution, expressed in the whole plant at low levels.

It is found in the cell membrane. It catalyses the reaction L-seryl-[protein] + ATP = O-phospho-L-seryl-[protein] + ADP + H(+). The enzyme catalyses L-threonyl-[protein] + ATP = O-phospho-L-threonyl-[protein] + ADP + H(+). The protein is Probable LRR receptor-like serine/threonine-protein kinase RKF3 (RKF3) of Arabidopsis thaliana (Mouse-ear cress).